A 66-amino-acid polypeptide reads, in one-letter code: Toxin Boma6b (66 aa).

The region spanning 2–64 (RDAYIAQNYN…VPIKVEGKCH (63 aa)) is the LCN-type CS-alpha/beta domain. 4 disulfide bridges follow: Cys-12–Cys-63, Cys-16–Cys-36, Cys-22–Cys-46, and Cys-26–Cys-48.

This sequence belongs to the long (4 C-C) scorpion toxin superfamily. Sodium channel inhibitor family. Alpha subfamily. Expressed by the venom gland.

The protein localises to the secreted. In terms of biological role, alpha toxins bind voltage-independently at site-3 of sodium channels (Nav) and inhibit the inactivation of the activated channels, thereby blocking neuronal transmission. The protein is Toxin Boma6b of Buthus occitanus mardochei (Moroccan scorpion).